We begin with the raw amino-acid sequence, 510 residues long: Pyruvate kinase, cytosolic isozyme (510 aa).

R50 lines the substrate pocket. The K(+) site is built by N52, S54, D84, and T85. 52-55 (NFSH) contacts ATP. ATP is bound by residues R91 and K176. E242 contacts Mg(2+). Substrate is bound by residues G265, D266, and T298. Mg(2+) is bound at residue D266.

It belongs to the pyruvate kinase family. Homotetramer. Requires Mg(2+) as cofactor. K(+) is required as a cofactor.

Its subcellular location is the cytoplasm. It carries out the reaction pyruvate + ATP = phosphoenolpyruvate + ADP + H(+). It participates in carbohydrate degradation; glycolysis; pyruvate from D-glyceraldehyde 3-phosphate: step 5/5. This Solanum tuberosum (Potato) protein is Pyruvate kinase, cytosolic isozyme.